Consider the following 228-residue polypeptide: MSSQAPVITIDGPSGSGKGTVAGLLARELGWRLLDSGALYRLLAFNASNHGVDLTNEELLKALAAHLDVQFIAAEPGKLQQIILEGEDVSNVIRTETVGAGASMVASLPAVREALLQRQRAFREAPGLIADGRDMGTVVFPDAPLKVFLTASAEERARRRYLQLKGKGEDVSLSSLLDEIRARDERDTQRAVAPLKPAADAIQLDSTELSIEQVLQRIRSELALRDLI.

An ATP-binding site is contributed by Gly-12 to Thr-20.

The protein belongs to the cytidylate kinase family. Type 1 subfamily.

Its subcellular location is the cytoplasm. It catalyses the reaction CMP + ATP = CDP + ADP. The catalysed reaction is dCMP + ATP = dCDP + ADP. The protein is Cytidylate kinase of Pseudomonas entomophila (strain L48).